Reading from the N-terminus, the 102-residue chain is Small ribosomal subunit protein uS10 (102 aa).

The protein belongs to the universal ribosomal protein uS10 family. In terms of assembly, part of the 30S ribosomal subunit.

Its function is as follows. Involved in the binding of tRNA to the ribosomes. This chain is Small ribosomal subunit protein uS10, found in Pelotomaculum thermopropionicum (strain DSM 13744 / JCM 10971 / SI).